Reading from the N-terminus, the 168-residue chain is Calcium-binding protein 2 (168 aa).

EF-hand domains follow at residues 13 to 48 (GMEK…AGKK), 48 to 83 (KNPE…MNDE), 88 to 123 (VLNW…QGAE), and 124 to 159 (DPEL…KKFS). D26, D28, N30, K32, E37, D61, D63, N65, E67, E72, D101, D103, D105, K107, E112, D137, D139, D141, and E148 together coordinate Ca(2+).

In terms of biological role, not known; probably binds four calcium ions. The chain is Calcium-binding protein 2 (cbp2) from Dictyostelium discoideum (Social amoeba).